A 155-amino-acid chain; its full sequence is Gas vesicle protein K (155 aa).

Belongs to the gas vesicle GvpK family.

It localises to the gas vesicle. Its function is as follows. Might be involved in nucleating gas vesicle formation. Gas vesicles (GV) are hollow, gas filled proteinaceous nanostructures. During planktonic growth they allow positioning of the organism at a favorable depth for light or nutrient acquisition. The chain is Gas vesicle protein K from Dolichospermum flosaquae (Anabaena flos-aquae).